Consider the following 581-residue polypeptide: Zinc finger protein 319 (581 aa).

Residues 1–22 (MSESWQQPPQTQPQQPQAPQPQ) are compositionally biased toward low complexity. Positions 1–39 (MSESWQQPPQTQPQQPQAPQPQHHAETPPALAEHTLPPG) are disordered. Residues 75-99 (PKCGVCGHDLAHLSSPHEHQCLAGH) form a C2H2-type 1 zinc finger. Residues 103-125 (FQCTQCLKIFHQATDLLEHQCVQ) form a C2H2-type 2; degenerate zinc finger. K129 is covalently cross-linked (Glycyl lysine isopeptide (Lys-Gly) (interchain with G-Cter in SUMO2)). 4 consecutive C2H2-type zinc fingers follow at residues 131–153 (FVCG…HSSH), 201–223 (YSCP…ERIH), 229–251 (YKCT…KRTH), and 257–279 (YKCA…MYAH). S280 is subject to Phosphoserine. A C2H2-type 7; degenerate zinc finger spans residues 286-308 (FRCNVCELHFKESSELLQHPCTP). 3 consecutive C2H2-type zinc fingers follow at residues 314 to 336 (FRCG…ERTH), 342 to 364 (FKCD…RRTH), and 370 to 392 (FKCG…QHVH). The C2H2-type 11; degenerate zinc-finger motif lies at 398 to 420 (FKCPVCQKGFDQSAELLRHKCLP). The C2H2-type 12 zinc finger occupies 427 to 449 (FKCPVCNKAYKRASALQKHQLSH). The segment at 457–479 (LRCTLCERRFFSSSEFVQHRCDP) adopts a C2H2-type 13; degenerate zinc-finger fold. 3 C2H2-type zinc fingers span residues 485-507 (LKCP…RRVH), 513-535 (YKCP…QGVH), and 541-563 (FKCV…SAQH).

The protein belongs to the krueppel C2H2-type zinc-finger protein family.

It localises to the nucleus. Functionally, may be involved in transcriptional regulation. This Mus musculus (Mouse) protein is Zinc finger protein 319 (Znf319).